Reading from the N-terminus, the 120-residue chain is Ribosome-binding factor A (120 aa).

This sequence belongs to the RbfA family. As to quaternary structure, monomer. Binds 30S ribosomal subunits, but not 50S ribosomal subunits or 70S ribosomes.

Its subcellular location is the cytoplasm. Functionally, one of several proteins that assist in the late maturation steps of the functional core of the 30S ribosomal subunit. Associates with free 30S ribosomal subunits (but not with 30S subunits that are part of 70S ribosomes or polysomes). Required for efficient processing of 16S rRNA. May interact with the 5'-terminal helix region of 16S rRNA. The chain is Ribosome-binding factor A from Rickettsia africae (strain ESF-5).